The following is a 617-amino-acid chain: Vacuolar protein sorting-associated protein 33B (617 aa).

Alanine 2 carries the N-acetylalanine modification.

Belongs to the STXBP/unc-18/SEC1 family. In terms of assembly, interacts with RAB11A and VIPAS39. Associates with adaptor protein complex 3 (AP-3), clathrin:AP-3 and clathrin:HGS complexes. Phosphorylated on tyrosine residues. As to expression, ubiquitous.

The protein localises to the late endosome membrane. The protein resides in the lysosome membrane. Its subcellular location is the early endosome. It is found in the cytoplasmic vesicle. It localises to the clathrin-coated vesicle. The protein localises to the recycling endosome. Functionally, may play a role in vesicle-mediated protein trafficking to lysosomal compartments and in membrane docking/fusion reactions of late endosomes/lysosomes. Mediates phagolysosomal fusion in macrophages. Proposed to be involved in endosomal maturation implicating VIPAS39. In epithelial cells, the VPS33B:VIPAS39 complex may play a role in the apical recycling pathway and in the maintenance of the apical-basolateral polarity. Seems to be involved in the sorting of specific cargos from the trans-Golgi network to alpha-granule-destined multivesicular bodies (MVBs) promoting MVBs maturation in megakaryocytes. This Rattus norvegicus (Rat) protein is Vacuolar protein sorting-associated protein 33B (Vps33b).